Reading from the N-terminus, the 348-residue chain is Protein arginine N-methyltransferase 1 (348 aa).

The region spanning 24-342 (KDYYFDSYAH…KGEVCDLNEQ (319 aa)) is the SAM-dependent MTase PRMT-type domain. Positions 37, 46, 70, 92, and 121 each coordinate S-adenosyl-L-methionine. Catalysis depends on residues Glu-139 and Glu-148.

Belongs to the class I-like SAM-binding methyltransferase superfamily. Protein arginine N-methyltransferase family. In terms of assembly, interacts with daf-16. Interacts with pgl-1 and pgl-3. Interacts with alg-1. In terms of tissue distribution, widely expressed in pharyngeal, body wall muscle, intestinal and vulval cells.

Its subcellular location is the cytoplasm. It localises to the nucleus. The catalysed reaction is L-arginyl-[protein] + 2 S-adenosyl-L-methionine = N(omega),N(omega)-dimethyl-L-arginyl-[protein] + 2 S-adenosyl-L-homocysteine + 2 H(+). It carries out the reaction L-arginyl-[protein] + S-adenosyl-L-methionine = N(omega)-methyl-L-arginyl-[protein] + S-adenosyl-L-homocysteine + H(+). Functionally, arginine methyltransferase that methylates (mono and asymmetric dimethylation) the guanidino nitrogens of arginyl residues present in target proteins. Catalyzes the formation of monomethylarginine and asymmetric dimethylarginine on histones H2A and H4, a specific tag for epigenetic transcriptional activation. Catalyzes asymmetric arginine dimethylation of mitochondrial proteins necessary for mitochondrial oxidative phosphorylation activity and thus aerobic respiration and ATP synthesis, and the mitochondrial stress response. Methylates arginine residues in P-granule components pgl-1 and pgl-3 to promote P-granule degradation by autophagy in somatic cells to ensure exclusive localization of the P-granules in germ cells. Modulates the interaction of P-granule proteins epg-2 and sepa-1. Methylates arginine residues in daf-16, which blocks ftt-2 binding to daf-16, prevents akt-mediated phosphorylation and allows for daf-16 to translocate to the nucleus. In turn, association with daf-16 therefore allows for the transcriptional activation of daf-16 and regulation of longevity-related genes. Maintains lifespan by modulating daf-16 activity downstream of the daf-2 signaling pathway. Plays a role in heat and oxidative stress resistance. Role in stress resistance and also fat storage may be in association with the daf-2 signaling pathway. Required for normal feeding behavior. This is Protein arginine N-methyltransferase 1 from Caenorhabditis elegans.